We begin with the raw amino-acid sequence, 199 residues long: Fe/S biogenesis protein NfuA (199 aa).

[4Fe-4S] cluster-binding residues include C151 and C154.

The protein belongs to the NfuA family. Homodimer. [4Fe-4S] cluster is required as a cofactor.

In terms of biological role, involved in iron-sulfur cluster biogenesis. Binds a 4Fe-4S cluster, can transfer this cluster to apoproteins, and thereby intervenes in the maturation of Fe/S proteins. Could also act as a scaffold/chaperone for damaged Fe/S proteins. This Xylella fastidiosa (strain M23) protein is Fe/S biogenesis protein NfuA.